A 371-amino-acid polypeptide reads, in one-letter code: tRNA-specific 2-thiouridylase MnmA (371 aa).

ATP-binding positions include 13 to 20 (GMSGGVDS) and methionine 39. Positions 99 to 101 (NPD) are interaction with target base in tRNA. Cysteine 104 functions as the Nucleophile in the catalytic mechanism. A disulfide bond links cysteine 104 and cysteine 200. Glycine 128 contributes to the ATP binding site. The interval 150 to 152 (KDQ) is interaction with tRNA. Cysteine 200 serves as the catalytic Cysteine persulfide intermediate. The interval 308–309 (RY) is interaction with tRNA.

Belongs to the MnmA/TRMU family.

Its subcellular location is the cytoplasm. It catalyses the reaction S-sulfanyl-L-cysteinyl-[protein] + uridine(34) in tRNA + AH2 + ATP = 2-thiouridine(34) in tRNA + L-cysteinyl-[protein] + A + AMP + diphosphate + H(+). In terms of biological role, catalyzes the 2-thiolation of uridine at the wobble position (U34) of tRNA, leading to the formation of s(2)U34. The polypeptide is tRNA-specific 2-thiouridylase MnmA (Bacillus cereus (strain ATCC 10987 / NRS 248)).